We begin with the raw amino-acid sequence, 305 residues long: Probable xyloglucan endotransglucosylase/hydrolase protein 8 (305 aa).

Positions 1–31 (METERRIITSCSAMTALFLFMTALMASSSIA) are cleaved as a signal peptide. The 200-residue stretch at 32 to 231 (ATPTQSFEDN…WKKAPFVSSY (200 aa)) folds into the GH16 domain. Asn-61 and Asn-66 each carry an N-linked (GlcNAc...) asparagine glycan. Glu-115 functions as the Nucleophile in the catalytic mechanism. Glu-119 acts as the Proton donor in catalysis. Xyloglucan is bound at residue Glu-119. N-linked (GlcNAc...) asparagine glycosylation occurs at Asn-123. 132–134 (QTN) serves as a coordination point for xyloglucan. Residue Asn-138 is glycosylated (N-linked (GlcNAc...) asparagine). Residues 142–144 (NRE), 210–211 (DW), and Gly-215 contribute to the xyloglucan site. Cystine bridges form between Cys-239-Cys-248 and Cys-286-Cys-299. Arg-291 is a xyloglucan binding site.

The protein belongs to the glycosyl hydrolase 16 family. XTH group 1 subfamily. Contains at least one intrachain disulfide bond essential for its enzymatic activity.

The protein localises to the secreted. Its subcellular location is the cell wall. It localises to the extracellular space. The protein resides in the apoplast. The enzyme catalyses breaks a beta-(1-&gt;4) bond in the backbone of a xyloglucan and transfers the xyloglucanyl segment on to O-4 of the non-reducing terminal glucose residue of an acceptor, which can be a xyloglucan or an oligosaccharide of xyloglucan.. Functionally, catalyzes xyloglucan endohydrolysis (XEH) and/or endotransglycosylation (XET). Cleaves and religates xyloglucan polymers, an essential constituent of the primary cell wall, and thereby participates in cell wall construction of growing tissues. This chain is Probable xyloglucan endotransglucosylase/hydrolase protein 8 (XTH8), found in Arabidopsis thaliana (Mouse-ear cress).